Reading from the N-terminus, the 156-residue chain is ATP synthase subunit b (156 aa).

A helical transmembrane segment spans residues 7–29 (LFAQMVVFLVLAWFTMKFVWPPL).

This sequence belongs to the ATPase B chain family. As to quaternary structure, F-type ATPases have 2 components, F(1) - the catalytic core - and F(0) - the membrane proton channel. F(1) has five subunits: alpha(3), beta(3), gamma(1), delta(1), epsilon(1). F(0) has three main subunits: a(1), b(2) and c(10-14). The alpha and beta chains form an alternating ring which encloses part of the gamma chain. F(1) is attached to F(0) by a central stalk formed by the gamma and epsilon chains, while a peripheral stalk is formed by the delta and b chains.

It localises to the cell inner membrane. In terms of biological role, f(1)F(0) ATP synthase produces ATP from ADP in the presence of a proton or sodium gradient. F-type ATPases consist of two structural domains, F(1) containing the extramembraneous catalytic core and F(0) containing the membrane proton channel, linked together by a central stalk and a peripheral stalk. During catalysis, ATP synthesis in the catalytic domain of F(1) is coupled via a rotary mechanism of the central stalk subunits to proton translocation. Its function is as follows. Component of the F(0) channel, it forms part of the peripheral stalk, linking F(1) to F(0). The protein is ATP synthase subunit b of Burkholderia lata (strain ATCC 17760 / DSM 23089 / LMG 22485 / NCIMB 9086 / R18194 / 383).